The following is a 261-amino-acid chain: uncharacterized protein (261 aa).

3 residues coordinate NADP(+): isoleucine 33, aspartate 78, and asparagine 105. Residue serine 157 is the Proton donor of the active site. Residues tyrosine 172, lysine 176, and serine 206 each coordinate NADP(+). Tyrosine 172 serves as the catalytic Proton acceptor. The Lowers pKa of active site Tyr role is filled by lysine 176.

It belongs to the short-chain dehydrogenases/reductases (SDR) family.

The protein localises to the cytoplasm. It localises to the nucleus. This is an uncharacterized protein from Schizosaccharomyces pombe (strain 972 / ATCC 24843) (Fission yeast).